The chain runs to 103 residues: Large ribosomal subunit protein bL21 (103 aa).

This sequence belongs to the bacterial ribosomal protein bL21 family. Part of the 50S ribosomal subunit. Contacts protein L20.

In terms of biological role, this protein binds to 23S rRNA in the presence of protein L20. This is Large ribosomal subunit protein bL21 from Aeromonas hydrophila subsp. hydrophila (strain ATCC 7966 / DSM 30187 / BCRC 13018 / CCUG 14551 / JCM 1027 / KCTC 2358 / NCIMB 9240 / NCTC 8049).